The primary structure comprises 213 residues: Charged multivesicular body protein 2b (213 aa).

Residue Ala-2 is modified to N-acetylalanine. The stretch at 25–55 (QRAIIRDRAALEKQEKQLELEIKKMAKIGNK) forms a coiled coil. The span at 179–194 (AKAPSAARSLPSASTS) shows a compositional bias: low complexity. The segment at 179-199 (AKAPSAARSLPSASTSKATIS) is disordered. Ser-199 carries the post-translational modification Phosphoserine. An MIT-interacting motif motif is present at residues 201 to 211 (EEIERQLKALG).

This sequence belongs to the SNF7 family. In terms of assembly, probable core component of the endosomal sorting required for transport complex III (ESCRT-III). ESCRT-III components are thought to multimerize to form a flat lattice on the perimeter membrane of the endosome. Several assembly forms of ESCRT-III may exist that interact and act sequentially. Interacts with CHMP2A. Interacts with VPS4A. Interacts with VPS4B; the interaction is direct. Widely expressed. Expressed in brain, heart, skeletal muscle, spleen, kidney, liver, small intestine, pancreas, lung, placenta and leukocytes. In brain, it is expressed in cerebellum, cerebral cortex, medulla, spinal cord, occipital lobe, frontal lobe, temporal lobe and putamen.

Its subcellular location is the cytoplasm. The protein localises to the cytosol. It is found in the late endosome membrane. Functionally, probable core component of the endosomal sorting required for transport complex III (ESCRT-III) which is involved in multivesicular bodies (MVBs) formation and sorting of endosomal cargo proteins into MVBs. MVBs contain intraluminal vesicles (ILVs) that are generated by invagination and scission from the limiting membrane of the endosome and mostly are delivered to lysosomes enabling degradation of membrane proteins, such as stimulated growth factor receptors, lysosomal enzymes and lipids. The MVB pathway appears to require the sequential function of ESCRT-O, -I,-II and -III complexes. ESCRT-III proteins mostly dissociate from the invaginating membrane before the ILV is released. The ESCRT machinery also functions in topologically equivalent membrane fission events, such as the terminal stages of cytokinesis and the budding of enveloped viruses (HIV-1 and other lentiviruses). ESCRT-III proteins are believed to mediate the necessary vesicle extrusion and/or membrane fission activities, possibly in conjunction with the AAA ATPase VPS4. The protein is Charged multivesicular body protein 2b (CHMP2B) of Homo sapiens (Human).